Reading from the N-terminus, the 413-residue chain is Gamma-glutamyl phosphate reductase (413 aa).

This sequence belongs to the gamma-glutamyl phosphate reductase family.

It localises to the cytoplasm. The catalysed reaction is L-glutamate 5-semialdehyde + phosphate + NADP(+) = L-glutamyl 5-phosphate + NADPH + H(+). It participates in amino-acid biosynthesis; L-proline biosynthesis; L-glutamate 5-semialdehyde from L-glutamate: step 2/2. Functionally, catalyzes the NADPH-dependent reduction of L-glutamate 5-phosphate into L-glutamate 5-semialdehyde and phosphate. The product spontaneously undergoes cyclization to form 1-pyrroline-5-carboxylate. This is Gamma-glutamyl phosphate reductase from Anoxybacillus flavithermus (strain DSM 21510 / WK1).